The primary structure comprises 214 residues: Type 4 apparatus protein DotN (214 aa).

Residues cysteine 52, cysteine 55, cysteine 84, and cysteine 87 each coordinate Zn(2+).

In terms of assembly, the T4BSS is a complex nanomachine composed of several subcomplexes. This subunit is part of the Type IV Coupling Complex (T4CC), a subcomplex composed of the DotLMNYZ core and the IcmSW-LvgA adapter subunits, linked by the C-terminal tail of DotL. Six DotLMNYZ hetero-pentameric units may assemble into a hexameric nanomachine, forming an inner membrane channel for effectors to pass through. Interacts directly with DotL. Interacts with DotZ.

Its subcellular location is the cytoplasm. Functionally, component of the Dot/Icm type IVB secretion system (T4BSS), which is used to inject bacterial effector proteins into eukaryotic host cells. Part of a subcomplex which recruits effector proteins and delivers them to the core transmembrane subcomplex. The protein is Type 4 apparatus protein DotN of Legionella pneumophila subsp. pneumophila (strain Philadelphia 1 / ATCC 33152 / DSM 7513).